The following is a 1073-amino-acid chain: Carbamoyl phosphate synthase large chain (1073 aa).

Residues 1–403 are carboxyphosphate synthetic domain; sequence MPKRTDIKSI…SLQKALRGLE (403 aa). Arg129, Arg169, Gly175, Gly176, Glu208, Leu210, Glu215, Gly241, Val242, His243, Gln285, and Glu299 together coordinate ATP. The ATP-grasp 1 domain occupies 133 to 328; that stretch reads DKAMKDIGLE…IAKIAAKLAI (196 aa). Gln285, Glu299, and Asn301 together coordinate Mg(2+). Gln285, Glu299, and Asn301 together coordinate Mn(2+). An oligomerization domain region spans residues 404–553; it reads VGACGLDPKV…YSTYEEECEA (150 aa). Residues 554–935 are carbamoyl phosphate synthetic domain; the sequence is NPSTRDKIMI…AFAKAQMGAS (382 aa). The ATP-grasp 2 domain occupies 678-869; sequence QQMVQRLSLL…LAMIAARVMA (192 aa). Arg714, His753, Leu755, Glu760, Gly785, Val786, His787, Ser788, Gln828, and Glu840 together coordinate ATP. The Mg(2+) site is built by Gln828, Glu840, and Asn842. Mn(2+) is bound by residues Gln828, Glu840, and Asn842. Residues 936–1073 form the MGS-like domain; it reads EVLPTGGTAF…LQDLHAGLKA (138 aa). An allosteric domain region spans residues 936–1073; the sequence is EVLPTGGTAF…LQDLHAGLKA (138 aa).

It belongs to the CarB family. As to quaternary structure, composed of two chains; the small (or glutamine) chain promotes the hydrolysis of glutamine to ammonia, which is used by the large (or ammonia) chain to synthesize carbamoyl phosphate. Tetramer of heterodimers (alpha,beta)4. It depends on Mg(2+) as a cofactor. Mn(2+) serves as cofactor.

It catalyses the reaction hydrogencarbonate + L-glutamine + 2 ATP + H2O = carbamoyl phosphate + L-glutamate + 2 ADP + phosphate + 2 H(+). It carries out the reaction hydrogencarbonate + NH4(+) + 2 ATP = carbamoyl phosphate + 2 ADP + phosphate + 2 H(+). The protein operates within amino-acid biosynthesis; L-arginine biosynthesis; carbamoyl phosphate from bicarbonate: step 1/1. It participates in pyrimidine metabolism; UMP biosynthesis via de novo pathway; (S)-dihydroorotate from bicarbonate: step 1/3. Functionally, large subunit of the glutamine-dependent carbamoyl phosphate synthetase (CPSase). CPSase catalyzes the formation of carbamoyl phosphate from the ammonia moiety of glutamine, carbonate, and phosphate donated by ATP, constituting the first step of 2 biosynthetic pathways, one leading to arginine and/or urea and the other to pyrimidine nucleotides. The large subunit (synthetase) binds the substrates ammonia (free or transferred from glutamine from the small subunit), hydrogencarbonate and ATP and carries out an ATP-coupled ligase reaction, activating hydrogencarbonate by forming carboxy phosphate which reacts with ammonia to form carbamoyl phosphate. The protein is Carbamoyl phosphate synthase large chain of Pseudomonas putida (strain ATCC 47054 / DSM 6125 / CFBP 8728 / NCIMB 11950 / KT2440).